A 350-amino-acid chain; its full sequence is Beta-ketodecanoyl-[acyl-carrier-protein] synthase (350 aa).

C133 is a catalytic residue.

The protein belongs to the thiolase-like superfamily. Beta-ketoacyl-ACP synthases family.

The catalysed reaction is octanoyl-CoA + malonyl-[ACP] + H(+) = 3-oxodecanoyl-[ACP] + CO2 + CoA. It functions in the pathway lipid metabolism; fatty acid biosynthesis. In terms of biological role, catalyzes the condensation of octanoyl-CoA, obtained from exogenously supplied fatty acids via beta-oxidation, with malonyl-[acyl-carrier protein], forming 3-oxodecanoyl-[acyl-carrier protein], an intermediate of the fatty acid elongation cycle that can then be extended to supply all of the cellular fatty acid needs. The enzyme thereby shunts fatty acid degradation intermediates from the beta-oxidation pathway into de novo fatty acid biosynthesis. This chain is Beta-ketodecanoyl-[acyl-carrier-protein] synthase, found in Pseudomonas aeruginosa (strain ATCC 15692 / DSM 22644 / CIP 104116 / JCM 14847 / LMG 12228 / 1C / PRS 101 / PAO1).